Here is a 283-residue protein sequence, read N- to C-terminus: Thymidylate synthase (283 aa).

Arg22 contacts dUMP. The Nucleophile role is filled by Cys160. Residues 180–183 (RSCD), Asn191, and 221–223 (HIY) each bind dUMP. Asp183 is a (6R)-5,10-methylene-5,6,7,8-tetrahydrofolate binding site. Ser282 contacts (6R)-5,10-methylene-5,6,7,8-tetrahydrofolate.

Belongs to the thymidylate synthase family. Bacterial-type ThyA subfamily. Homodimer.

The protein localises to the cytoplasm. The enzyme catalyses dUMP + (6R)-5,10-methylene-5,6,7,8-tetrahydrofolate = 7,8-dihydrofolate + dTMP. The protein operates within pyrimidine metabolism; dTTP biosynthesis. Its function is as follows. Catalyzes the reductive methylation of 2'-deoxyuridine-5'-monophosphate (dUMP) to 2'-deoxythymidine-5'-monophosphate (dTMP) while utilizing 5,10-methylenetetrahydrofolate (mTHF) as the methyl donor and reductant in the reaction, yielding dihydrofolate (DHF) as a by-product. This enzymatic reaction provides an intracellular de novo source of dTMP, an essential precursor for DNA biosynthesis. The sequence is that of Thymidylate synthase from Shewanella halifaxensis (strain HAW-EB4).